The chain runs to 450 residues: Oxygen-independent coproporphyrinogen III oxidase (450 aa).

The 238-residue stretch at 45 to 282 folds into the Radical SAM core domain; sequence IPAGGSISLY…RTLILWDGYQ (238 aa). Position 54 (tyrosine 54) interacts with S-adenosyl-L-methionine. Positions 60 and 64 each coordinate [4Fe-4S] cluster. Phenylalanine 66 serves as a coordination point for S-adenosyl-L-methionine. Cysteine 67 contacts [4Fe-4S] cluster. S-adenosyl-L-methionine-binding positions include glycine 111, 112–113, glutamate 144, glutamine 171, arginine 183, aspartate 208, alanine 242, and isoleucine 328; that span reads GT.

This sequence belongs to the anaerobic coproporphyrinogen-III oxidase family. Monomer. The cofactor is [4Fe-4S] cluster.

It is found in the cytoplasm. It carries out the reaction coproporphyrinogen III + 2 S-adenosyl-L-methionine = protoporphyrinogen IX + 2 5'-deoxyadenosine + 2 L-methionine + 2 CO2. The protein operates within porphyrin-containing compound metabolism; protoporphyrin-IX biosynthesis; protoporphyrinogen-IX from coproporphyrinogen-III (AdoMet route): step 1/1. Involved in the heme and chlorophyll biosynthesis. Catalyzes the anaerobic oxidative decarboxylation of propionate groups of rings A and B of coproporphyrinogen III to yield the vinyl groups in protoporphyrinogen IX. The chain is Oxygen-independent coproporphyrinogen III oxidase (hemZ) from Cereibacter sphaeroides (strain ATCC 17023 / DSM 158 / JCM 6121 / CCUG 31486 / LMG 2827 / NBRC 12203 / NCIMB 8253 / ATH 2.4.1.) (Rhodobacter sphaeroides).